The primary structure comprises 359 residues: Chorismate synthase (359 aa).

Arg47 provides a ligand contact to NADP(+). FMN is bound by residues Arg123 to Ser125, Gly283, Lys298 to Ser302, and Arg326.

This sequence belongs to the chorismate synthase family. As to quaternary structure, homotetramer. The cofactor is FMNH2.

The enzyme catalyses 5-O-(1-carboxyvinyl)-3-phosphoshikimate = chorismate + phosphate. It functions in the pathway metabolic intermediate biosynthesis; chorismate biosynthesis; chorismate from D-erythrose 4-phosphate and phosphoenolpyruvate: step 7/7. In terms of biological role, catalyzes the anti-1,4-elimination of the C-3 phosphate and the C-6 proR hydrogen from 5-enolpyruvylshikimate-3-phosphate (EPSP) to yield chorismate, which is the branch point compound that serves as the starting substrate for the three terminal pathways of aromatic amino acid biosynthesis. This reaction introduces a second double bond into the aromatic ring system. The sequence is that of Chorismate synthase from Chlamydia felis (strain Fe/C-56) (Chlamydophila felis).